Here is a 159-residue protein sequence, read N- to C-terminus: Ribosomal RNA large subunit methyltransferase H (159 aa).

S-adenosyl-L-methionine contacts are provided by L76 and G108.

This sequence belongs to the RNA methyltransferase RlmH family. As to quaternary structure, homodimer.

It is found in the cytoplasm. It catalyses the reaction pseudouridine(1915) in 23S rRNA + S-adenosyl-L-methionine = N(3)-methylpseudouridine(1915) in 23S rRNA + S-adenosyl-L-homocysteine + H(+). Functionally, specifically methylates the pseudouridine at position 1915 (m3Psi1915) in 23S rRNA. The chain is Ribosomal RNA large subunit methyltransferase H from Natranaerobius thermophilus (strain ATCC BAA-1301 / DSM 18059 / JW/NM-WN-LF).